Here is a 273-residue protein sequence, read N- to C-terminus: 3-methyl-2-oxobutanoate hydroxymethyltransferase (273 aa).

Mg(2+)-binding residues include Asp49 and Asp88. Residues 49 to 50 (DS), Asp88, and Lys118 each bind 3-methyl-2-oxobutanoate. Glu120 serves as a coordination point for Mg(2+). Glu187 acts as the Proton acceptor in catalysis.

It belongs to the PanB family. Homodecamer; pentamer of dimers. Mg(2+) serves as cofactor.

The protein resides in the cytoplasm. It catalyses the reaction 3-methyl-2-oxobutanoate + (6R)-5,10-methylene-5,6,7,8-tetrahydrofolate + H2O = 2-dehydropantoate + (6S)-5,6,7,8-tetrahydrofolate. It functions in the pathway cofactor biosynthesis; (R)-pantothenate biosynthesis; (R)-pantoate from 3-methyl-2-oxobutanoate: step 1/2. Functionally, catalyzes the reversible reaction in which hydroxymethyl group from 5,10-methylenetetrahydrofolate is transferred onto alpha-ketoisovalerate to form ketopantoate. The polypeptide is 3-methyl-2-oxobutanoate hydroxymethyltransferase (Sinorhizobium fredii (strain NBRC 101917 / NGR234)).